The following is a 1368-amino-acid chain: DNA-directed RNA polymerase subunit beta (1368 aa).

Belongs to the RNA polymerase beta chain family. In terms of assembly, the RNAP catalytic core consists of 2 alpha, 1 beta, 1 beta' and 1 omega subunit. When a sigma factor is associated with the core the holoenzyme is formed, which can initiate transcription.

It carries out the reaction RNA(n) + a ribonucleoside 5'-triphosphate = RNA(n+1) + diphosphate. Its function is as follows. DNA-dependent RNA polymerase catalyzes the transcription of DNA into RNA using the four ribonucleoside triphosphates as substrates. This is DNA-directed RNA polymerase subunit beta from Burkholderia cenocepacia (strain ATCC BAA-245 / DSM 16553 / LMG 16656 / NCTC 13227 / J2315 / CF5610) (Burkholderia cepacia (strain J2315)).